A 539-amino-acid polypeptide reads, in one-letter code: T-complex protein 1 subunit delta (539 aa).

The interval 1-28 is disordered; the sequence is MPENVASRSGPPAAGPGNRGKGAYQDRD. Position 19 is an omega-N-methylarginine (Arg-19). Position 21 is an N6-acetyllysine (Lys-21). Position 36 is a phosphoserine (Ser-36). ADP is bound at residue Gly-53. An ATP-binding site is contributed by Gly-53. Asp-104 contributes to the Mg(2+) binding site. 7 residues coordinate ADP: Gly-105, Thr-106, Thr-107, Ser-108, Asn-172, Ser-173, and Lys-174. Residues Gly-105 and Thr-106 each contribute to the ATP site. Residue Lys-174 coordinates ATP. Phosphoserine occurs at positions 184 and 202. 4 positions are modified to N6-acetyllysine: Lys-288, Lys-302, Lys-319, and Lys-326. Gly-425 serves as a coordination point for ADP. Residue Ser-444 is modified to Phosphoserine. Gln-510 contributes to the ADP binding site.

Belongs to the TCP-1 chaperonin family. In terms of assembly, component of the chaperonin-containing T-complex (TRiC), a hexadecamer composed of two identical back-to-back stacked rings enclosing a protein folding chamber. Each ring is made up of eight different subunits: TCP1/CCT1, CCT2, CCT3, CCT4, CCT5, CCT6A/CCT6, CCT7, CCT8. Interacts with PACRG. Interacts with DNAAF4. Interacts with DLEC1.

It localises to the cytoplasm. It is found in the melanosome. The protein localises to the cytoskeleton. The protein resides in the microtubule organizing center. Its subcellular location is the centrosome. It localises to the cilium basal body. It catalyses the reaction ATP + H2O = ADP + phosphate + H(+). Its function is as follows. Component of the chaperonin-containing T-complex (TRiC), a molecular chaperone complex that assists the folding of actin, tubulin and other proteins upon ATP hydrolysis. The TRiC complex mediates the folding of WRAP53/TCAB1, thereby regulating telomere maintenance. As part of the TRiC complex may play a role in the assembly of BBSome, a complex involved in ciliogenesis regulating transports vesicles to the cilia. This chain is T-complex protein 1 subunit delta (Cct4), found in Rattus norvegicus (Rat).